Consider the following 490-residue polypeptide: Glutamyl-tRNA(Gln) amidotransferase subunit A (490 aa).

Catalysis depends on charge relay system residues Lys78 and Ser158. The active-site Acyl-ester intermediate is the Ser182.

The protein belongs to the amidase family. GatA subfamily. Heterotrimer of A, B and C subunits.

It carries out the reaction L-glutamyl-tRNA(Gln) + L-glutamine + ATP + H2O = L-glutaminyl-tRNA(Gln) + L-glutamate + ADP + phosphate + H(+). Allows the formation of correctly charged Gln-tRNA(Gln) through the transamidation of misacylated Glu-tRNA(Gln) in organisms which lack glutaminyl-tRNA synthetase. The reaction takes place in the presence of glutamine and ATP through an activated gamma-phospho-Glu-tRNA(Gln). This Caulobacter sp. (strain K31) protein is Glutamyl-tRNA(Gln) amidotransferase subunit A.